The sequence spans 475 residues: B-type cell cycle switch protein ccs52A (475 aa).

The segment at 1 to 29 (MDGTGNRNPPPTSTVGDNSPPPEPSPESL) is disordered. The PEST motif signature appears at 7-28 (RNPPPTSTVGDNSPPPEPSPES). Ser43 and Ser45 each carry phosphoserine. The C-box motif lies at 51 to 57 (DRFIPSR). The CSM motif signature appears at 80–91 (AYTTLLRTALFG). Thr99 carries the post-translational modification Phosphothreonine. 2 positions are modified to phosphoserine: Ser144 and Ser155. WD repeat units lie at residues 166-203 (QDDF…VTKL), 207-246 (GVDD…KIRS), 249-289 (GHRL…SKLS), 290-329 (GHKS…PVLK), 332-374 (EHTA…HLSC), 376-417 (DTGS…KLAT), and 420-459 (GHTY…KSQN). At Ser454 the chain carries Phosphoserine.

Belongs to the WD repeat CDC20/Fizzy family. Mostly expressed in nodules, and, to a lower extent, in root tips, stems, hypocotyls, leaves, flower buds and flowers.

It is found in the nucleus. Its pathway is protein modification; protein ubiquitination. In terms of biological role, component of the anaphase promoting complex/cyclosome (APC/C), a cell cycle-regulated E3 ubiquitin-protein ligase complex that controls progression through mitosis and the G1 phase of the cell cycle. Required to switch form cell proliferation to cell differentiation, endoreduplication and ploidy-dependent cell enlargement, including during nodulation, before nodule differentiation. Involved in root-knot nematode Meloidogyne incognita giant cells formation. The sequence is that of B-type cell cycle switch protein ccs52A from Medicago truncatula (Barrel medic).